The chain runs to 488 residues: MLRINRISNLRTFGQRFFSTEQQDVVVIGGGPGGYVAGIKAGQLGMKVTVVEKRGKLGGTCLNVGCIPSKALLNASHLYEEATTKMSKYGVKCSGVELDLGAMMQYKDKSVSGLTSGIEGLFKKNKVKYDKGFGKITGPNTVEVTLNDGSVKTIETKNIVIATGSEVTSLPNVNIDEESIISSTGALALKSVPKKLIVIGGGVIGLELGSVWSRLGSETTVVEFTNRIAAGADGEVAKKFQKSLEKQHMKFHLETKVTSVVKKSDGKVTVTVEQVGAGGFTGTLEADAVLVSVGRRPNTSGLGLESVGIPTDKAGRVEVGDHFNTKVPSIFAIGDAIRGPMLAHKAEEEGIAIIEQIHNGGGHVNYGAIPSIIYTHPEVAWVGKTEEELQKEGIQYNIGRFPFVANSRAKTNDDVEGFVKFLAAKDSDRVLGAHIMGTNAGELIGECVLAMEYGASCEDIARTCHGHPTLSEAVKEAAMDAYDKPIHM.

The N-terminal 25 residues, 1-25, are a transit peptide targeting the mitochondrion; that stretch reads MLRINRISNLRTFGQRFFSTEQQDV. FAD-binding positions include 52-61, Lys-70, Gly-134, and 163-165; these read EKRGKLGGTC and TGS. Residues Cys-61 and Cys-66 are joined by a disulfide bond. NAD(+)-binding positions include 200–207, Glu-223, Val-257, and Gly-294; that span reads GGGVIGLE. FAD-binding positions include Asp-335 and 341 to 344; that span reads MLAH. His-467 functions as the Proton acceptor in the catalytic mechanism.

Belongs to the class-I pyridine nucleotide-disulfide oxidoreductase family. It depends on FAD as a cofactor.

The protein resides in the mitochondrion matrix. The enzyme catalyses N(6)-[(R)-dihydrolipoyl]-L-lysyl-[protein] + NAD(+) = N(6)-[(R)-lipoyl]-L-lysyl-[protein] + NADH + H(+). The polypeptide is Dihydrolipoyl dehydrogenase, mitochondrial (lpd) (Dictyostelium discoideum (Social amoeba)).